The primary structure comprises 877 residues: Envelope glycoprotein gp160 (877 aa).

The signal sequence occupies residues 1-19; sequence MKLTLLIGILLIGIGVVLN. The Extracellular segment spans residues 20–707; the sequence is TRQQWVTVFY…SWFDFSKWLN (688 aa). N-linked (GlcNAc...) asparagine; by host glycosylation is found at Asn-36, Asn-69, Asn-118, Asn-135, Asn-148, Asn-158, Asn-173, Asn-204, Asn-216, Asn-258, Asn-261, Asn-272, Asn-282, Asn-288, Asn-300, Asn-312, Asn-322, Asn-379, Asn-420, Asn-431, Asn-495, and Asn-498. Disulfide bonds link Cys-102–Cys-224, Cys-109–Cys-215, Cys-114–Cys-174, Cys-237–Cys-267, and Cys-247–Cys-259. The segment at 114-173 is V1; the sequence is CVELNSSEPTTTPKSTTASTTNITASTTTLPCVQNKTSTVLESCNETIIEKELNEEPASN. The V2 stretch occupies residues 174-215; it reads CTFAMAGYVRDQKKKYSVVWNDAEIMCKKGNNSNRECYMIHC. The tract at residues 317 to 349 is V3; the sequence is CKRPGNKTVLPVTIMAGLVFHSQRYNTRLRQAW. Cys-317 and Cys-350 form a disulfide bridge. 2 cysteine pairs are disulfide-bonded: Cys-402–Cys-478 and Cys-409–Cys-451. The interval 409 to 451 is V4; the sequence is CKMDWFLNYLNNRTVDPDHNPCNGTKGKGKAPGPCAQRTYVAC. Positions 494 to 501 are V5; it reads KNRTNVTL. The fusion peptide stretch occupies residues 544–564; it reads VPFVLGFLGFLGAAGTAMGAA. The interval 607 to 623 is immunosuppression; it reads LNARVTALEKYLEDQAR. Asn-652 and Asn-668 each carry an N-linked (GlcNAc...) asparagine; by host glycan. The stretch at 668-692 forms a coiled coil; the sequence is NITTQLEEARAQEEKNLDAYQKLSS. The interval 689–710 is MPER; binding to GalCer; it reads KLSSWSDFWSWFDFSKWLNILK. A helical membrane pass occupies residues 708–728; the sequence is ILKIGFLDVLGIIGLRLLYTV. Over 729 to 877 the chain is Cytoplasmic; sequence YSCIARVRQG…VRQGLEGILN (149 aa). Positions 739 to 742 match the YXXL motif; contains endocytosis signal motif; the sequence is YSPL. The disordered stretch occupies residues 751–779; it reads WKGQPDNAEGPGEGGDKRKNSSEPWQKES.

In terms of assembly, the mature envelope protein (Env) consists of a homotrimer of non-covalently associated gp120-gp41 heterodimers. The resulting complex protrudes from the virus surface as a spike. Interacts with host CD4 and CCR5. Gp120 also interacts with the C-type lectins CD209/DC-SIGN and CLEC4M/DC-SIGNR (collectively referred to as DC-SIGN(R)). As to quaternary structure, the mature envelope protein (Env) consists of a homotrimer of non-covalently associated gp120-gp41 heterodimers. The resulting complex protrudes from the virus surface as a spike. Post-translationally, specific enzymatic cleavages in vivo yield mature proteins. Envelope glycoproteins are synthesized as an inactive precursor that is heavily N-glycosylated and processed likely by host cell furin in the Golgi to yield the mature SU and TM proteins. The cleavage site between SU and TM requires the minimal sequence [KR]-X-[KR]-R.

The protein resides in the virion membrane. It is found in the host cell membrane. The protein localises to the host endosome membrane. Its function is as follows. The surface protein gp120 (SU) attaches the virus to the host lymphoid cell by binding to the primary receptor CD4. This interaction induces a structural rearrangement creating a high affinity binding site for a chemokine coreceptor like CCR5. This peculiar 2 stage receptor-interaction strategy allows gp120 to maintain the highly conserved coreceptor-binding site in a cryptic conformation, protected from neutralizing antibodies. These changes are transmitted to the transmembrane protein gp41 and are thought to activate its fusogenic potential by unmasking its fusion peptide. Surface protein gp120 (SU) may target the virus to gut-associated lymphoid tissue (GALT) by binding host ITGA4/ITGB7 (alpha-4/beta-7 integrins), a complex that mediates T-cell migration to the GALT. Interaction between gp120 and ITGA4/ITGB7 would allow the virus to enter GALT early in the infection, infecting and killing most of GALT's resting CD4+ T-cells. This T-cell depletion is believed to be the major insult to the host immune system leading to AIDS. Functionally, the surface protein gp120 is a ligand for CD209/DC-SIGN and CLEC4M/DC-SIGNR, which are respectively found on dendritic cells (DCs), and on endothelial cells of liver sinusoids and lymph node sinuses. These interactions allow capture of viral particles at mucosal surfaces by these cells and subsequent transmission to permissive cells. DCs are professional antigen presenting cells, critical for host immunity by inducing specific immune responses against a broad variety of pathogens. They act as sentinels in various tissues where they take up antigen, process it, and present it to T-cells following migration to lymphoid organs. SIV subverts the migration properties of dendritic cells to gain access to CD4+ T-cells in lymph nodes. Virus transmission to permissive T-cells occurs either in trans (without DCs infection, through viral capture and transmission), or in cis (following DCs productive infection, through the usual CD4-gp120 interaction), thereby inducing a robust infection. In trans infection, bound virions remain infectious over days and it is proposed that they are not degraded, but protected in non-lysosomal acidic organelles within the DCs close to the cell membrane thus contributing to the viral infectious potential during DCs' migration from the periphery to the lymphoid tissues. On arrival at lymphoid tissues, intact virions recycle back to DCs' cell surface allowing virus transmission to CD4+ T-cells. Virion capture also seems to lead to MHC-II-restricted viral antigen presentation, and probably to the activation of SIV-specific CD4+ cells. In terms of biological role, the transmembrane protein gp41 (TM) acts as a class I viral fusion protein. Under the current model, the protein has at least 3 conformational states: pre-fusion native state, pre-hairpin intermediate state, and post-fusion hairpin state. During fusion of viral and target intracellular membranes, the coiled coil regions (heptad repeats) assume a trimer-of-hairpins structure, positioning the fusion peptide in close proximity to the C-terminal region of the ectodomain. The formation of this structure appears to drive apposition and subsequent fusion of viral and target cell membranes. Complete fusion occurs in host cell endosomes. The virus undergoes clathrin-dependent internalization long before endosomal fusion, thus minimizing the surface exposure of conserved viral epitopes during fusion and reducing the efficacy of inhibitors targeting these epitopes. Membranes fusion leads to delivery of the nucleocapsid into the cytoplasm. Its function is as follows. The envelope glycoprotein gp160 precursor down-modulates cell surface CD4 antigen by interacting with it in the endoplasmic reticulum and blocking its transport to the cell surface. The gp120-gp41 heterodimer allows rapid transcytosis of the virus through CD4 negative cells such as simple epithelial monolayers of the intestinal, rectal and endocervical epithelial barriers. Both gp120 and gp41 specifically recognize glycosphingolipids galactosyl-ceramide (GalCer) or 3' sulfo-galactosyl-ceramide (GalS) present in the lipid rafts structures of epithelial cells. Binding to these alternative receptors allows the rapid transcytosis of the virus through the epithelial cells. This transcytotic vesicle-mediated transport of virions from the apical side to the basolateral side of the epithelial cells does not involve infection of the cells themselves. In Cercopithecidae (Old World monkeys), this protein is Envelope glycoprotein gp160 (env).